The chain runs to 121 residues: Centrocin 2 (121 aa).

A signal peptide spans 1 to 20 (MMIKIAVVLCAVMATSMVFA). Positions 21 to 50 (NDVKEQELADLLDLLISEEVSSPDDAVAES) are excised as a propeptide. Tryptophan 51 and tryptophan 59 each carry 6'-bromotryptophan. A disulfide bond links cysteine 77 and cysteine 112. The propeptide occupies 83–106 (SPQEARAKVLEAFPEMKESDLDEE). Glutamine 107 is modified (pyrrolidone carboxylic acid). The residue at position 119 (histidine 119) is a Histidine amide.

Heterodimer of a light and a heavy chain, probably disulfide-linked.

In terms of biological role, has antimicrobial activity against Gram-negative bacteria, Gram-positive bacteria and against fungi with minimum inhibitory concentration (MIC) between 0.78 uM and 50 uM. Shows little hemolytic activity at concentrations up to 12.5 uM but &gt;50% lysis at 100 uM. In Echinus esculentus (Sea urchin), this protein is Centrocin 2.